We begin with the raw amino-acid sequence, 388 residues long: Succinate--CoA ligase [ADP-forming] subunit beta (388 aa).

Positions 9–244 constitute an ATP-grasp domain; it reads KALFAEYGLP…PSQDDAREAH (236 aa). ATP is bound by residues Lys-46, 53–55, Glu-99, Thr-102, and Glu-107; that span reads GRG. Asn-199 and Asp-213 together coordinate Mg(2+). Substrate-binding positions include Asn-264 and 321–323; that span reads GIV.

This sequence belongs to the succinate/malate CoA ligase beta subunit family. As to quaternary structure, heterotetramer of two alpha and two beta subunits. Mg(2+) serves as cofactor.

The catalysed reaction is succinate + ATP + CoA = succinyl-CoA + ADP + phosphate. It catalyses the reaction GTP + succinate + CoA = succinyl-CoA + GDP + phosphate. The protein operates within carbohydrate metabolism; tricarboxylic acid cycle; succinate from succinyl-CoA (ligase route): step 1/1. Its function is as follows. Succinyl-CoA synthetase functions in the citric acid cycle (TCA), coupling the hydrolysis of succinyl-CoA to the synthesis of either ATP or GTP and thus represents the only step of substrate-level phosphorylation in the TCA. The beta subunit provides nucleotide specificity of the enzyme and binds the substrate succinate, while the binding sites for coenzyme A and phosphate are found in the alpha subunit. This is Succinate--CoA ligase [ADP-forming] subunit beta from Shewanella sediminis (strain HAW-EB3).